A 468-amino-acid chain; its full sequence is Effector protein hopD2 (468 aa).

Positions 1–20 (MNPLQPIQHSITNSQMSGGQ) are enriched in polar residues. A disordered region spans residues 1–35 (MNPLQPIQHSITNSQMSGGQQLEAEGSQAHNSYSH). The Tyrosine-protein phosphatase domain occupies 143-468 (DASSPPSAND…TQWRAKIALE (326 aa)). Residue Cys-378 is the Phosphocysteine intermediate of the active site.

As to quaternary structure, interacts with EFR and FLS2 (via the kinase and cytoplasmic domains).

The protein localises to the secreted. It carries out the reaction O-phospho-L-tyrosyl-[protein] + H2O = L-tyrosyl-[protein] + phosphate. Inhibited by sodium orthovanadate. In terms of biological role, effector showing tyrosine-phosphatase activity required for host defense suppression. Functions inside plant cells causing suppression of HR (hypersensitive response), PR1 gene expression and oxidative burst probably by interfering with a MAPK (mitogen-activated protein kinase) pathway. MAPK cascades are known to activate defense-related transcription factors. Inhibits plant pattern-recognition receptors (PRRs) activation. In Pseudomonas syringae pv. tomato (strain ATCC BAA-871 / DC3000), this protein is Effector protein hopD2 (hopD2).